The sequence spans 241 residues: MATNAKPVYQRILLKLSGEALQGTEGFGIDASILDRMAQEVKELVELGIQVGVVIGGGNLFRGAGLAKAGMNRVVGDHMGMLATVMNGLAMRDALHRAYVNARLMSAIPLNGVCDNYSWAEAISLLRNNRVVIFSAGTGNPFFTTDSAACLRGIEIEADVVLKATKVDGVYSADPVQDPSATMYETLTYQDVLERELKVMDLAAFTLARDHNLPIRVFNMNKPGALRRVVMGEKEGTLISQ.

15–18 is an ATP binding site; it reads KLSG. The interval 23 to 28 is involved in allosteric activation by GTP; the sequence is GTEGFG. Position 57 (Gly-57) interacts with UMP. Residues Gly-58 and Arg-62 each contribute to the ATP site. Residues Asp-77 and 138–145 contribute to the UMP site; that span reads TGNPFFTT. The ATP site is built by Thr-165, Tyr-171, and Asp-174.

The protein belongs to the UMP kinase family. Homohexamer.

The protein resides in the cytoplasm. The enzyme catalyses UMP + ATP = UDP + ADP. It functions in the pathway pyrimidine metabolism; CTP biosynthesis via de novo pathway; UDP from UMP (UMPK route): step 1/1. Its activity is regulated as follows. Allosterically activated by GTP. Inhibited by UTP. Its function is as follows. Catalyzes the reversible phosphorylation of UMP to UDP. This chain is Uridylate kinase, found in Pectobacterium atrosepticum (strain SCRI 1043 / ATCC BAA-672) (Erwinia carotovora subsp. atroseptica).